Here is a 258-residue protein sequence, read N- to C-terminus: NAD kinase (258 aa).

The Proton acceptor role is filled by aspartate 51. NAD(+) contacts are provided by residues 51 to 52 (DG), 119 to 120 (ND), lysine 130, aspartate 149, 160 to 165 (TAYSLS), and alanine 184.

It belongs to the NAD kinase family. In terms of assembly, homodimer. The cofactor is a divalent metal cation.

It is found in the cytoplasm. The enzyme catalyses NAD(+) + ATP = ADP + NADP(+) + H(+). Functionally, involved in the regulation of the intracellular balance between NAD(H) and NADP(H), and is a key enzyme in the biosynthesis of NADP. Catalyzes specifically the phosphorylation on 2'-hydroxyl of the adenosine moiety of NAD to yield NADP. The protein is NAD kinase (NADK) of Thermotoga maritima (strain ATCC 43589 / DSM 3109 / JCM 10099 / NBRC 100826 / MSB8).